Reading from the N-terminus, the 98-residue chain is Integration host factor subunit alpha (98 aa).

A compositionally biased stretch (basic and acidic residues) spans 53-69 (DLREKSERPGRNPKTGE). Positions 53 to 73 (DLREKSERPGRNPKTGEDIPI) are disordered.

Belongs to the bacterial histone-like protein family. Heterodimer of an alpha and a beta chain.

Its function is as follows. This protein is one of the two subunits of integration host factor, a specific DNA-binding protein that functions in genetic recombination as well as in transcriptional and translational control. The sequence is that of Integration host factor subunit alpha from Aliivibrio fischeri (strain ATCC 700601 / ES114) (Vibrio fischeri).